The chain runs to 73 residues: Large ribosomal subunit protein bL31 (73 aa).

The protein belongs to the bacterial ribosomal protein bL31 family. Type A subfamily. In terms of assembly, part of the 50S ribosomal subunit.

Functionally, binds the 23S rRNA. The chain is Large ribosomal subunit protein bL31 (rpmE) from Ruegeria pomeroyi (strain ATCC 700808 / DSM 15171 / DSS-3) (Silicibacter pomeroyi).